The primary structure comprises 915 residues: Rab3 GTPase-activating protein catalytic subunit (915 aa).

The protein belongs to the Rab3-GAP catalytic subunit family. In terms of assembly, the Rab3 GTPase-activating complex is a heterodimer composed of rbg-1 and rbg-2.

The protein localises to the cytoplasm. Its function is as follows. Probable catalytic subunit of a GTPase activating protein that has specificity for Rab3 subfamily. Rab3 proteins are involved in regulated exocytosis of neurotransmitters and hormones. Specifically converts active Rab3-GTP to the inactive form Rab3-GDP. The protein is Rab3 GTPase-activating protein catalytic subunit (rbg-1) of Caenorhabditis elegans.